The primary structure comprises 599 residues: uncharacterized protein (599 aa).

A compositionally biased stretch (polar residues) spans 1–10; sequence MEQQSENVYF. The disordered stretch occupies residues 1–146; that stretch reads MEQQSENVYF…EPSFTLTELP (146 aa). A compositionally biased stretch (low complexity) spans 11-20; that stretch reads SGSESESLSD. Over residues 24–44 the composition is skewed to polar residues; it reads RAQPQNQNSDNSRSASLTPPD. 2 stretches are compositionally biased toward acidic residues: residues 46-56 and 89-114; these read SDLEDYVDSDS and NGSD…EEED. Residues 118-127 are compositionally biased toward low complexity; it reads RSSSRSAMDI. Acidic residues predominate over residues 128-138; the sequence is SSEEDSGDDEP.

The protein belongs to the IIV-6 229L family.

This is an uncharacterized protein from Aedes vexans (Inland floodwater mosquito).